The primary structure comprises 638 residues: Pentatricopeptide repeat-containing protein At1g59720, chloroplastic/mitochondrial (638 aa).

A chloroplast and mitochondrion-targeting transit peptide spans 1 to 40; sequence MVVRSIIVSPPTTITYYHPMSIGLLVHPLSPHIPPASSPS. 10 PPR repeats span residues 82–112, 113–148, 150–184, 185–215, 216–246, 250–280, 288–318, 319–353, 356–390, and 392–422; these read TLFL…IENH, SSFM…GESS, DKHT…GFGG, DVYV…MPER, SLVS…MQRS, DGYT…LLRK, DVLV…MQKR, DLAS…RENV, NSVT…YCIE, and ALEH…MPMK. A type E motif region spans residues 427–510; that stretch reads IWRSLLDACC…EPGCSSIEIN (84 aa). Positions 511–541 are type E(+) motif; the sequence is GISHEFFAGDTSHPQTKQIYQQLKVIDDRLR. Residues 542–638 are type DYW motif; sequence SIGYLPDRSQ…DGSCSCLDYW (97 aa).

The protein belongs to the PPR family. PCMP-H subfamily. As to quaternary structure, interacts with ORRM1. Interacts with VAR3/OZ1.

The protein localises to the plastid. Its subcellular location is the chloroplast. The protein resides in the mitochondrion. In terms of biological role, involved in multiple sites RNA editing events in chloroplasts. Involved in the editing of the site 2 of ndhB (ndhB-2) and site 3 of ndhD (ndhD-3) transcripts, which are two plastid-encoded subunits of the chloroplast NAD(P)H dehydrogenase (NDH) complex. Required for the activity of the NDH complex of the photosynthetic electron transport chain. The sequence is that of Pentatricopeptide repeat-containing protein At1g59720, chloroplastic/mitochondrial (PCMP-H51) from Arabidopsis thaliana (Mouse-ear cress).